The chain runs to 147 residues: Plasminogen receptor (KT) (147 aa).

Over 1–52 (MGFIFSKSMNENMKNQQEFMVTHARLQLERHLTMQNEMRERQMAMQIAWSRE) the chain is Extracellular. Residues 53–73 (FLKYFGTFFGIATISLATGAL) traverse the membrane as a helical segment. The Cytoplasmic portion of the chain corresponds to 74–78 (KRKKP). A helical membrane pass occupies residues 79 to 99 (AFLVPIVPLSFIFTYQYDLGY). The Extracellular portion of the chain corresponds to 100 to 147 (GTLLQRMKSEAEDILETEKTKLELPKGLITFESLEKARREQSKLFSDK).

Interacts with PLAT. Interacts with PLAUR. As to expression, expressed in monocytes; detected in differentiated monocytes but not in progenitor cells. Expressed in adrenal medulla and hippocampus.

Its subcellular location is the cell membrane. Functionally, receptor for plasminogen. Regulates urokinase plasminogen activator-dependent and stimulates tissue-type plasminogen activator-dependent cell surface plasminogen activation. Proposed to be part of a local catecholaminergic cell plasminogen activation system that regulates neuroendocrine prohormone processing. Involved in regulation of inflammatory response; regulates monocyte chemotactic migration and matrix metalloproteinase activation, such as of MMP2 and MMP9. The polypeptide is Plasminogen receptor (KT) (Plgrkt) (Mus musculus (Mouse)).